Reading from the N-terminus, the 75-residue chain is UPF0352 protein VSAL_I1058 (75 aa).

The protein belongs to the UPF0352 family.

The protein is UPF0352 protein VSAL_I1058 of Aliivibrio salmonicida (strain LFI1238) (Vibrio salmonicida (strain LFI1238)).